Here is a 359-residue protein sequence, read N- to C-terminus: 3-dehydroquinate synthase (359 aa).

NAD(+) is bound by residues 71-76 (DGEAYK), 105-109 (GVIGD), 129-130 (TT), lysine 142, and lysine 151. Positions 184, 247, and 264 each coordinate Zn(2+).

This sequence belongs to the sugar phosphate cyclases superfamily. Dehydroquinate synthase family. Requires Co(2+) as cofactor. Zn(2+) serves as cofactor. It depends on NAD(+) as a cofactor.

Its subcellular location is the cytoplasm. It carries out the reaction 7-phospho-2-dehydro-3-deoxy-D-arabino-heptonate = 3-dehydroquinate + phosphate. Its pathway is metabolic intermediate biosynthesis; chorismate biosynthesis; chorismate from D-erythrose 4-phosphate and phosphoenolpyruvate: step 2/7. Catalyzes the conversion of 3-deoxy-D-arabino-heptulosonate 7-phosphate (DAHP) to dehydroquinate (DHQ). The protein is 3-dehydroquinate synthase of Burkholderia multivorans (strain ATCC 17616 / 249).